The chain runs to 302 residues: Nudix hydrolase 5 (302 aa).

One can recognise a Nudix hydrolase domain in the interval S122 to A254. The Nudix box motif lies at G159–D180. Positions 174 and 178 each coordinate Mg(2+).

This sequence belongs to the Nudix hydrolase family. Mg(2+) serves as cofactor. Requires Mn(2+) as cofactor. Expressed in roots, stems and leaves.

Probably mediates the hydrolysis of some nucleoside diphosphate derivatives. This Arabidopsis thaliana (Mouse-ear cress) protein is Nudix hydrolase 5 (NUDT5).